Here is a 382-residue protein sequence, read N- to C-terminus: Toluene efflux pump periplasmic linker protein TtgD (382 aa).

An N-terminal signal peptide occupies residues 1–23 (MRLERALRARQLIPLAAIWLLVG). Cys24 is lipidated: N-palmitoyl cysteine. Cys24 is lipidated: S-diacylglycerol cysteine. Residues 100 to 136 (YEALLARAEASLLTAQNLARRYERLLDTNAISQQQYD) are a coiled coil.

Belongs to the membrane fusion protein (MFP) (TC 8.A.1) family.

It is found in the cell inner membrane. In terms of biological role, the periplasmic linker protein component of an inducible organic solvent efflux pump. Involved in export of toluene and styrene but not of m-xylene, propylbenzene or ethylbenzene. Is not involved in antibiotic or AMP efflux. This is Toluene efflux pump periplasmic linker protein TtgD (ttgD) from Pseudomonas putida (strain DOT-T1E).